A 1806-amino-acid polypeptide reads, in one-letter code: Focadhesin (1806 aa).

Residues 733–760 form a disordered region; it reads ARPIPKQPEVEDEVKQNEEENEEEEDIS.

The protein localises to the cell junction. Its subcellular location is the focal adhesion. It localises to the cytoplasm. It is found in the cytosol. Required for the maintenance of SKIC2 and SKIC3 proteostatic levels in the liver. May be involved in the regulation of RNA degradation by the exosome complex. The protein is Focadhesin (focad) of Danio rerio (Zebrafish).